Here is a 416-residue protein sequence, read N- to C-terminus: DNA-guanine transglycosylase (416 aa).

D95 (proton acceptor) is an active-site residue. D256 (nucleophile) is an active-site residue. Zn(2+) contacts are provided by C368, C370, C373, and H395.

Belongs to the DNA-guanine transglycosylase family. It depends on Zn(2+) as a cofactor.

Functionally, part of the dpd cluster involved in the insertion of 7-deazaguanine derivatives in DNA. DpdA may insert 7-cyano-7-deazaguanine (preQ0) into DNA with the help of DpdB. DpdA and dpdB are necessary and sufficient to synthesize 2'-deoxy-7-cyano-7-deazaguanosine (dPreQ0). The polypeptide is DNA-guanine transglycosylase (Salmonella montevideo).